Here is a 283-residue protein sequence, read N- to C-terminus: 5'-nucleotidase SurE (283 aa).

Residues aspartate 14, aspartate 15, serine 47, and asparagine 105 each contribute to the a divalent metal cation site.

Belongs to the SurE nucleotidase family. It depends on a divalent metal cation as a cofactor.

The protein localises to the cytoplasm. It catalyses the reaction a ribonucleoside 5'-phosphate + H2O = a ribonucleoside + phosphate. Functionally, nucleotidase that shows phosphatase activity on nucleoside 5'-monophosphates. This chain is 5'-nucleotidase SurE, found in Chlamydia trachomatis serovar A (strain ATCC VR-571B / DSM 19440 / HAR-13).